The chain runs to 128 residues: HFNAPSHIRRKIMSSPLSKELRQKYNVRSMPIRKDDEVQVVRGHYKGQQIGKVVQVYRKKYVIYIERVQREKANGTTVHVGIHPSKVVITRLKLDKDRKKILERKAKSRQVGKEKGKYKEETIEKMQE.

The interval 105-128 is disordered; it reads KAKSRQVGKEKGKYKEETIEKMQE.

This sequence belongs to the universal ribosomal protein uL24 family. As to quaternary structure, component of the large ribosomal subunit.

The protein localises to the cytoplasm. Component of the large ribosomal subunit. The ribosome is a large ribonucleoprotein complex responsible for the synthesis of proteins in the cell. The chain is Large ribosomal subunit protein uL24 (RPL26) from Gallus gallus (Chicken).